The following is a 240-amino-acid chain: tRNA (guanine-N(1)-)-methyltransferase (240 aa).

S-adenosyl-L-methionine contacts are provided by residues Gly110 and 129 to 134 (LGDFVL).

The protein belongs to the RNA methyltransferase TrmD family. As to quaternary structure, homodimer.

It localises to the cytoplasm. It catalyses the reaction guanosine(37) in tRNA + S-adenosyl-L-methionine = N(1)-methylguanosine(37) in tRNA + S-adenosyl-L-homocysteine + H(+). Specifically methylates guanosine-37 in various tRNAs. The polypeptide is tRNA (guanine-N(1)-)-methyltransferase (Clostridium botulinum (strain Kyoto / Type A2)).